Consider the following 195-residue polypeptide: U8 snoRNA-decapping enzyme (195 aa).

In terms of domain architecture, Nudix hydrolase spans 18 to 173; sequence GWRHACHALL…IGSAREQLLE (156 aa). 3 residues coordinate substrate: His-24, Arg-50, and Phe-57. Gly-59, Glu-76, Glu-80, and His-99 together coordinate Mn(2+). A Nudix box motif is present at residues 61–82; the sequence is FVDTQDRSLEDGLNRELREELG. A substrate-binding site is contributed by Gln-170. Residue Glu-173 participates in Mn(2+) binding.

The protein belongs to the Nudix hydrolase family. NUDT16 subfamily. Homodimer. Mg(2+) serves as cofactor. It depends on Mn(2+) as a cofactor. Co(2+) is required as a cofactor. As to expression, expressed strongly in lung, kidney, adrenal gland, testis, heart and brain.

The protein resides in the nucleus. Its subcellular location is the nucleoplasm. It is found in the nucleolus. The protein localises to the cytoplasm. The catalysed reaction is a 5'-end (N(7)-methyl 5'-triphosphoguanosine)-ribonucleoside in mRNA + H2O = N(7)-methyl-GDP + a 5'-end phospho-ribonucleoside in mRNA + 2 H(+). The enzyme catalyses IDP + H2O = IMP + phosphate + H(+). It catalyses the reaction dIDP + H2O = dIMP + phosphate + H(+). It carries out the reaction a 5'-end NAD(+)-phospho-ribonucleoside in mRNA + H2O = a 5'-end phospho-adenosine-phospho-ribonucleoside in mRNA + beta-nicotinamide D-ribonucleotide + 2 H(+). The catalysed reaction is a 5'-end FAD-phospho-ribonucleoside in mRNA + H2O = a 5'-end phospho-adenosine-phospho-ribonucleoside in mRNA + FMN + 2 H(+). The enzyme catalyses a 5'-end CoA-ribonucleoside in mRNA + H2O = a 5'-end phospho-adenosine-phospho-ribonucleoside in mRNA + (R)-4'-phosphopantetheine + 2 H(+). With respect to regulation, the phosphatase activity is inhibited by the product IMP. In terms of biological role, RNA-binding and decapping enzyme that catalyzes the cleavage of the cap structure of snoRNAs and mRNAs in a metal-dependent manner. Part of the U8 snoRNP complex that is required for the accumulation of mature 5.8S and 28S rRNA. Has diphosphatase activity and removes m7G and/or m227G caps from U8 snoRNA and leaves a 5'monophosphate on the RNA. Also catalyzes the cleavage of the cap structure on mRNAs. Does not hydrolyze cap analog structures like 7-methylguanosine nucleoside triphosphate (m7GpppG). Also hydrolysis m7G- and m227G U3-capped RNAs but with less efficiencies. Has broad substrate specificity with manganese or cobalt as cofactor and can act on various RNA species. Binds to the U8 snoRNA; metal is not required for RNA-binding. May play a role in the regulation of snoRNAs and mRNAs degradation. Also acts as a phosphatase; hydrolyzes the non-canonical purine nucleotides inosine diphosphate (IDP) and deoxyinosine diphosphate (dITP) as well as guanosine diphosphate (GDP), deoxyguanosine diphosphate (dGDP), xanthine diphosphate (XDP), inosine triphosphate (ITP) and deoxyinosine triphosphate (ITP) to their respective monophosphate derivatives and does not distinguish between the deoxy- and ribose forms. The order of activity with different substrates is IDP &gt; dIDP &gt;&gt; GDP = dGDP &gt; XDP = ITP = dITP. Binds strongly to GTP, ITP and XTP. Participates in the hydrolysis of dIDP/IDP and probably excludes non-canonical purines from RNA and DNA precursor pools, thus preventing their incorporation into RNA and DNA and avoiding chromosomal lesions. Exhibits decapping activity towards NAD-capped RNAs and FAD-capped RNAs. Exhibits decapping activity towards dpCoA-capped RNAs in vitro. The polypeptide is U8 snoRNA-decapping enzyme (NUDT16) (Homo sapiens (Human)).